An 872-amino-acid chain; its full sequence is DNA mismatch repair protein MutS (872 aa).

602–609 contributes to the ATP binding site; sequence GPNMSGKS.

The protein belongs to the DNA mismatch repair MutS family.

Its function is as follows. This protein is involved in the repair of mismatches in DNA. It is possible that it carries out the mismatch recognition step. This protein has a weak ATPase activity. The sequence is that of DNA mismatch repair protein MutS from Staphylococcus aureus (strain bovine RF122 / ET3-1).